Reading from the N-terminus, the 300-residue chain is MALRTDWNGVFPAMVTPFRENGSFDEASFKALIELYISEGVKGVVVTGSTGEWYSMSDAERATVWEVAVEASSGRITVIAGTSAVGTREALALTRTAKAVGVDGCMLLPPGGIFAARNEVVNYFHTLAGVGLPIMVYNNPPRTGVNMDADMVAEIAKSEEIVSFKDINRYLYAASEIIYRVCDKLAVFTGLEPYASSVLPRGAVGVVSTISNICAANMVSYYNAVISGDSATAYKTQKLIDQLYHFLPTLGAPAFVSVKAAMKLLGRPGGEIRLPHLPANEALIGKLREELRRLKMMTLN.

Residue S49 is the Charge relay system of the active site. Y137 functions as the Proton donor in the catalytic mechanism. The active-site Schiff-base intermediate with substrate is the K165.

Belongs to the DapA family. As to quaternary structure, homotetramer.

The protein resides in the cytoplasm. Upon expression in E.coli complements a dapA deletion mutation, but this may not be its physiological function. This is an uncharacterized protein from Rhizobium meliloti (Ensifer meliloti).